The primary structure comprises 443 residues: Glucose-6-phosphate isomerase (443 aa).

The Proton donor role is filled by glutamate 285. Catalysis depends on residues histidine 306 and lysine 420.

Belongs to the GPI family.

The protein localises to the cytoplasm. It catalyses the reaction alpha-D-glucose 6-phosphate = beta-D-fructose 6-phosphate. It participates in carbohydrate biosynthesis; gluconeogenesis. Its pathway is carbohydrate degradation; glycolysis; D-glyceraldehyde 3-phosphate and glycerone phosphate from D-glucose: step 2/4. In terms of biological role, catalyzes the reversible isomerization of glucose-6-phosphate to fructose-6-phosphate. The chain is Glucose-6-phosphate isomerase from Staphylococcus epidermidis (strain ATCC 12228 / FDA PCI 1200).